Reading from the N-terminus, the 125-residue chain is Large ribosomal subunit protein bL12 (125 aa).

The protein belongs to the bacterial ribosomal protein bL12 family. In terms of assembly, homodimer. Part of the ribosomal stalk of the 50S ribosomal subunit. Forms a multimeric L10(L12)X complex, where L10 forms an elongated spine to which 2 to 4 L12 dimers bind in a sequential fashion. Binds GTP-bound translation factors.

Forms part of the ribosomal stalk which helps the ribosome interact with GTP-bound translation factors. Is thus essential for accurate translation. This Rickettsia felis (strain ATCC VR-1525 / URRWXCal2) (Rickettsia azadi) protein is Large ribosomal subunit protein bL12.